Reading from the N-terminus, the 873-residue chain is Bifunctional uridylyltransferase/uridylyl-removing enzyme (873 aa).

The uridylyltransferase stretch occupies residues 1-332 (MKYLSPLSLS…HQGEQDDAII (332 aa)). Positions 333 to 692 (IDDDFQRRGR…ISKNASRGGT (360 aa)) are uridylyl-removing. The HD domain occupies 451-573 (VDEHSIRLLK…VRDEERLDYL (123 aa)). ACT domains are found at residues 693–777 (EIFV…RPPR) and 800–873 (LMEF…RLSS).

This sequence belongs to the GlnD family. It depends on Mg(2+) as a cofactor.

The catalysed reaction is [protein-PII]-L-tyrosine + UTP = [protein-PII]-uridylyl-L-tyrosine + diphosphate. It catalyses the reaction [protein-PII]-uridylyl-L-tyrosine + H2O = [protein-PII]-L-tyrosine + UMP + H(+). Uridylyltransferase (UTase) activity is inhibited by glutamine, while glutamine activates uridylyl-removing (UR) activity. Its function is as follows. Modifies, by uridylylation and deuridylylation, the PII regulatory proteins (GlnB and homologs), in response to the nitrogen status of the cell that GlnD senses through the glutamine level. Under low glutamine levels, catalyzes the conversion of the PII proteins and UTP to PII-UMP and PPi, while under higher glutamine levels, GlnD hydrolyzes PII-UMP to PII and UMP (deuridylylation). Thus, controls uridylylation state and activity of the PII proteins, and plays an important role in the regulation of nitrogen assimilation and metabolism. The protein is Bifunctional uridylyltransferase/uridylyl-removing enzyme of Aliivibrio fischeri (strain MJ11) (Vibrio fischeri).